We begin with the raw amino-acid sequence, 125 residues long: Histone H1-like protein Hc1 (125 aa).

Residues 98–125 (TKAKVKPTKKAAPKTKVKTAKKTRSTKK) are disordered. Residues 100-125 (AKVKPTKKAAPKTKVKTAKKTRSTKK) show a composition bias toward basic residues.

The protein belongs to the histone H1/H5 family. HCT subfamily.

In terms of biological role, might have a role analogous to that of eukaryotic histone proteins. The chain is Histone H1-like protein Hc1 (hctA) from Chlamydia trachomatis serovar L2 (strain ATCC VR-902B / DSM 19102 / 434/Bu).